Consider the following 73-residue polypeptide: UPF0346 protein SAS1364 (73 aa).

This sequence belongs to the UPF0346 family.

The protein is UPF0346 protein SAS1364 of Staphylococcus aureus (strain MSSA476).